Consider the following 582-residue polypeptide: Leucine-rich repeat transmembrane neuronal protein 3 (582 aa).

Residues 1-30 (MGFNVIRLLRGSAVAVVLAPTVLLTMLSSA) form the signal peptide. The 31-residue stretch at 31–61 (ERGCPKGCRCEGKMVYCESQKLQEIPSSISA) folds into the LRRNT domain. The Extracellular portion of the chain corresponds to 31–420 (ERGCPKGCRC…VDTEHISFHK (390 aa)). 10 LRR repeats span residues 63–83 (CLGL…QFKG), 86–107 (QLTW…AFNG), 110–131 (RLKE…TFRP), 134–155 (NLRN…QFRG), 158–179 (KLLS…IFQD), 182–203 (NLEL…VFAG), 206–226 (RLKE…ALFP), 230–251 (SLQN…MSWT), 254–275 (SLQR…SVFQ), and 279–300 (NLQR…ILDS). A glycan (N-linked (GlcNAc...) asparagine) is linked at Asn126. The 52-residue stretch at 312 to 363 (NIWECSRNICSLVNWLRSFKGLRENTIICASPKELQGVNVIDAVKNYSICGK) folds into the LRRCT domain. Asn357 is a glycosylation site (N-linked (GlcNAc...) asparagine). Residues 378-410 (KPTFKPKLPRPKHESKPPLPPTVGATEPSPETD) are disordered. Residues 421 to 441 (IIAGSVALFLSVLVILLVMYV) form a helical membrane-spanning segment. Topologically, residues 442 to 582 (SWKRYPASMK…RISDHKPQLA (141 aa)) are cytoplasmic.

It belongs to the LRRTM family. In terms of tissue distribution, expressed in neuronal tissues.

It is found in the cell membrane. It localises to the postsynaptic cell membrane. Functionally, may play a role in the development and maintenance of the vertebrate nervous system. Exhibits a limited synaptogenic activity in vitro, restricted to excitatory presynaptic differentiation. This Mus musculus (Mouse) protein is Leucine-rich repeat transmembrane neuronal protein 3 (Lrrtm3).